Here is a 179-residue protein sequence, read N- to C-terminus: MIFYLHGFDATSPGNHEKMRQLQFIDPDVRLVSYSTLHPKHDMQHLLKEVAKQMKHSDDPAPLMVGVGLGAYWAERIGFLNGLKSVLINPNLHPEENMQGKIDRPEEYADIANKCVSQFREKNTHKAMCIFSVNDEMFDNQQLASELSAYYSIDWDDVQPHKFPQLAAHLPKIKAFKLA.

This sequence belongs to the UPF0227 family.

This chain is UPF0227 protein Sbal_2415, found in Shewanella baltica (strain OS155 / ATCC BAA-1091).